The chain runs to 474 residues: Zinc finger protein 230 (474 aa).

The KRAB domain maps to 8–76 (VTFKDVAVFF…ETATQREGNS (69 aa)). The KRNB stretch occupies residues 80 to 167 (TIAEAGPHED…PQQFHSGEKS (88 aa)). 9 C2H2-type zinc fingers span residues 168 to 190 (HTCN…QRVH), 196 to 218 (SKCD…ERVH), 224 to 246 (FKCE…CKLH), 252 to 274 (YICE…QIIH), 280 to 302 (FKCE…CMVH), 308 to 330 (YKSE…QIIH), 336 to 358 (YNCK…QRIH), 364 to 386 (YRCE…QRVH), and 392 to 414 (YNCK…KKLH). The C2H2-type 10; atypical zinc finger occupies 420 to 442 (FKCEDCGKRLVHRSFCKDQQGDH).

It belongs to the krueppel C2H2-type zinc-finger protein family.

The protein resides in the nucleus. May be involved in transcriptional regulation. The protein is Zinc finger protein 230 (ZNF230) of Homo sapiens (Human).